We begin with the raw amino-acid sequence, 173 residues long: Protein TraS (173 aa).

The protein resides in the cell inner membrane. Involved in surface exclusion. In Escherichia coli (strain K12), this protein is Protein TraS (traS).